The following is a 211-amino-acid chain: Phosphoribosyl-dephospho-CoA transferase (211 aa).

Residues Asp136 and Asp138 contribute to the active site.

This sequence belongs to the MdcG family.

The catalysed reaction is apo-[malonate decarboxylase ACP] + 2'-(5''-triphospho-alpha-D-ribosyl)-3'-dephospho-CoA = holo-[malonate decarboxylase ACP] + diphosphate. In terms of biological role, transfers 2'-(5-triphosphoribosyl)-3'-dephosphocoenzyme-A to the apo-[acyl-carrier-protein] of the malonate decarboxylase to yield holo-[acyl-carrier-protein]. The polypeptide is Phosphoribosyl-dephospho-CoA transferase (Pseudomonas syringae pv. tomato (strain ATCC BAA-871 / DC3000)).